The primary structure comprises 247 residues: MKNGIDFVETEAYARIYNFILMVDDSIKNSEQRQSKHHMDVLADITRIVSETEKDPSPQRYANMAAKTVFKKIYDTYDDEYLRNSFGNQIRLDYGTGHELNFLCYLYAQYCRGSIGIDCVFTILVKYFEIVRLFITKFNLEPAGSHGMWGLDDYQFLPFLFGSSELCNTTLRFDELDGSKCYFVAVEKKLGGSSRILKSIMDKDWASINRGMIRMYDDHVLRRSVVTQHFIYGEYLRKDRSQANKDL.

It belongs to the PTPA-type PPIase family.

It is found in the cytoplasm. The enzyme catalyses [protein]-peptidylproline (omega=180) = [protein]-peptidylproline (omega=0). Functionally, PPIases accelerate the folding of proteins. It catalyzes the cis-trans isomerization of proline imidic peptide bonds in oligopeptides. Acts as a regulatory subunit for PP2A-like phosphatases modulating their activity or substrate specificity, probably by inducing a conformational change in the catalytic subunit, a direct target of the PPIase. Can reactivate inactive phosphatase PP2A-phosphatase methylesterase complexes (PP2Ai) in presence of ATP and Mg(2+) by dissociating the inactive form from the complex. This chain is Serine/threonine-protein phosphatase 2A activator, found in Encephalitozoon cuniculi (strain GB-M1) (Microsporidian parasite).